We begin with the raw amino-acid sequence, 529 residues long: Peptide chain release factor 3 (529 aa).

The tr-type G domain occupies 11–280 (AKRRTFAIIS…GLVEWAPAPM (270 aa)). Residues 20 to 27 (SHPDAGKT), 88 to 92 (DTPGH), and 142 to 145 (NKLD) each bind GTP.

It belongs to the TRAFAC class translation factor GTPase superfamily. Classic translation factor GTPase family. PrfC subfamily.

It is found in the cytoplasm. Its function is as follows. Increases the formation of ribosomal termination complexes and stimulates activities of RF-1 and RF-2. It binds guanine nucleotides and has strong preference for UGA stop codons. It may interact directly with the ribosome. The stimulation of RF-1 and RF-2 is significantly reduced by GTP and GDP, but not by GMP. The polypeptide is Peptide chain release factor 3 (Yersinia pestis bv. Antiqua (strain Antiqua)).